The following is a 1534-amino-acid chain: Alpha-2-macroglobulin homolog (1534 aa).

Positions 1 to 38 (MDTQRFQSQFHWHLSFKFSGAIAACLSLSLVGTGLANA) are cleaved as a signal peptide.

The protein belongs to the protease inhibitor I39 (alpha-2-macroglobulin) family. Bacterial alpha-2-macroglobulin subfamily.

In Escherichia coli O157:H7, this protein is Alpha-2-macroglobulin homolog (yfaS).